The primary structure comprises 258 residues: Snake venom serine protease 3 (258 aa).

An N-terminal signal peptide occupies residues 1–18 (MVLIRVLANLLILQLSYA). Residues 19-24 (QKSSEL) constitute a propeptide that is removed on maturation. Residues 25–249 (VIGGDECNIN…YTDWIQSIIA (225 aa)) enclose the Peptidase S1 domain. Cystine bridges form between C31–C163, C50–C66, C98–C256, C142–C210, C174–C189, and C200–C225. N-linked (GlcNAc...) asparagine glycosylation occurs at N44. Residue H65 is the Charge relay system of the active site. The N-linked (GlcNAc...) asparagine glycan is linked to N103. Catalysis depends on D110, which acts as the Charge relay system. N-linked (GlcNAc...) asparagine glycans are attached at residues N117, N121, and N154. The active-site Charge relay system is S204. N251 carries an N-linked (GlcNAc...) asparagine glycan.

Belongs to the peptidase S1 family. Snake venom subfamily. As to quaternary structure, monomer. As to expression, expressed by the venom gland.

Its subcellular location is the secreted. Snake venom serine protease that may act in the hemostasis system of the prey. The chain is Snake venom serine protease 3 (TLG3) from Craspedocephalus gramineus (Bamboo pit viper).